A 94-amino-acid polypeptide reads, in one-letter code: Probable Fe(2+)-trafficking protein (94 aa).

The protein belongs to the Fe(2+)-trafficking protein family.

Could be a mediator in iron transactions between iron acquisition and iron-requiring processes, such as synthesis and/or repair of Fe-S clusters in biosynthetic enzymes. The chain is Probable Fe(2+)-trafficking protein from Haemophilus ducreyi (strain 35000HP / ATCC 700724).